We begin with the raw amino-acid sequence, 333 residues long: Glycerol-3-phosphate dehydrogenase [NAD(P)+] (333 aa).

NADPH-binding residues include Trp15 and Lys108. Sn-glycerol 3-phosphate is bound by residues Lys108, Gly136, and Ser138. An NADPH-binding site is contributed by Ala140. The sn-glycerol 3-phosphate site is built by Lys191, Asp244, Ser254, Arg255, and Asn256. Catalysis depends on Lys191, which acts as the Proton acceptor. An NADPH-binding site is contributed by Arg255. Residues Val279 and Glu281 each coordinate NADPH.

The protein belongs to the NAD-dependent glycerol-3-phosphate dehydrogenase family.

It is found in the cytoplasm. The catalysed reaction is sn-glycerol 3-phosphate + NAD(+) = dihydroxyacetone phosphate + NADH + H(+). It catalyses the reaction sn-glycerol 3-phosphate + NADP(+) = dihydroxyacetone phosphate + NADPH + H(+). The protein operates within membrane lipid metabolism; glycerophospholipid metabolism. In terms of biological role, catalyzes the reduction of the glycolytic intermediate dihydroxyacetone phosphate (DHAP) to sn-glycerol 3-phosphate (G3P), the key precursor for phospholipid synthesis. This chain is Glycerol-3-phosphate dehydrogenase [NAD(P)+], found in Maricaulis maris (strain MCS10) (Caulobacter maris).